A 353-amino-acid polypeptide reads, in one-letter code: Photosystem II D2 protein (353 aa).

The residue at position 2 (T2) is an N-acetylthreonine. The residue at position 2 (T2) is a Phosphothreonine. A helical transmembrane segment spans residues 41–61 (CAYFALGGWFTGTTFVTSWYT). H118 provides a ligand contact to chlorophyll a. A helical transmembrane segment spans residues 125–141 (GFMLRQFEIARSVQLRP). Pheophytin a-binding residues include Q130 and N143. A helical transmembrane segment spans residues 153-166 (VFVSVFLIYPLGQS). Residue H198 participates in chlorophyll a binding. Residues 208–228 (AALLCAIHGATVENTLFEDGD) form a helical membrane-spanning segment. Residues H215 and F262 each contribute to the a plastoquinone site. H215 provides a ligand contact to Fe cation. Residue H269 participates in Fe cation binding. The helical transmembrane segment at 279 to 295 (GLWMSALGVVGLALNLR) threads the bilayer.

This sequence belongs to the reaction center PufL/M/PsbA/D family. As to quaternary structure, PSII is composed of 1 copy each of membrane proteins PsbA, PsbB, PsbC, PsbD, PsbE, PsbF, PsbH, PsbI, PsbJ, PsbK, PsbL, PsbM, PsbT, PsbX, PsbY, PsbZ, Psb30/Ycf12, at least 3 peripheral proteins of the oxygen-evolving complex and a large number of cofactors. It forms dimeric complexes. Requires The D1/D2 heterodimer binds P680, chlorophylls that are the primary electron donor of PSII, and subsequent electron acceptors. It shares a non-heme iron and each subunit binds pheophytin, quinone, additional chlorophylls, carotenoids and lipids. There is also a Cl(-1) ion associated with D1 and D2, which is required for oxygen evolution. The PSII complex binds additional chlorophylls, carotenoids and specific lipids. as cofactor.

The protein resides in the plastid. The protein localises to the chloroplast thylakoid membrane. It catalyses the reaction 2 a plastoquinone + 4 hnu + 2 H2O = 2 a plastoquinol + O2. Its function is as follows. Photosystem II (PSII) is a light-driven water:plastoquinone oxidoreductase that uses light energy to abstract electrons from H(2)O, generating O(2) and a proton gradient subsequently used for ATP formation. It consists of a core antenna complex that captures photons, and an electron transfer chain that converts photonic excitation into a charge separation. The D1/D2 (PsbA/PsbD) reaction center heterodimer binds P680, the primary electron donor of PSII as well as several subsequent electron acceptors. D2 is needed for assembly of a stable PSII complex. The chain is Photosystem II D2 protein from Oenothera argillicola (Appalachian evening primrose).